The sequence spans 550 residues: Glucose-6-phosphate isomerase 2 (550 aa).

E359 acts as the Proton donor in catalysis. Residues H390 and K514 contribute to the active site.

It belongs to the GPI family.

Its subcellular location is the cytoplasm. The catalysed reaction is alpha-D-glucose 6-phosphate = beta-D-fructose 6-phosphate. Its pathway is carbohydrate biosynthesis; gluconeogenesis. It functions in the pathway carbohydrate degradation; glycolysis; D-glyceraldehyde 3-phosphate and glycerone phosphate from D-glucose: step 2/4. In terms of biological role, catalyzes the reversible isomerization of glucose-6-phosphate to fructose-6-phosphate. The protein is Glucose-6-phosphate isomerase 2 of Streptomyces avermitilis (strain ATCC 31267 / DSM 46492 / JCM 5070 / NBRC 14893 / NCIMB 12804 / NRRL 8165 / MA-4680).